The sequence spans 342 residues: Putative gluconeogenesis factor (342 aa).

The disordered stretch occupies residues Ser318–Arg342. Thr325 is subject to Phosphothreonine. Residues Gly333 to Arg342 show a composition bias toward basic and acidic residues.

It belongs to the gluconeogenesis factor family. Post-translationally, phosphorylated by PknA and/or PknB.

The protein resides in the cytoplasm. Its function is as follows. Required for morphogenesis under gluconeogenic growth conditions. In Mycobacterium tuberculosis (strain CDC 1551 / Oshkosh), this protein is Putative gluconeogenesis factor.